Reading from the N-terminus, the 142-residue chain is Neurofilament heavy polypeptide (142 aa).

The IF rod domain occupies 1 to 142 (MRGAVLRLGA…EAAKVNTDAM (142 aa)). Positions 26-74 (IAHVRQRLDDEARQRQEAEAAARALARFAQEAEAARVELQKKAQALQEE) form a coiled coil.

It belongs to the intermediate filament family. Forms heterodimers with NEFL; which can further hetero-oligomerize (in vitro). Forms heterodimers with INA (in vitro). There are a number of repeats of the tripeptide K-S-P, NFH is phosphorylated on a number of the serines in this motif. It is thought that phosphorylation of NFH results in the formation of interfilament cross bridges that are important in the maintenance of axonal caliber. In terms of processing, phosphorylation seems to play a major role in the functioning of the larger neurofilament polypeptides (NF-M and NF-H), the levels of phosphorylation being altered developmentally and coincidentally with a change in the neurofilament function. Post-translationally, phosphorylated in the head and rod regions by the PKC kinase PKN1, leading to the inhibition of polymerization.

The protein resides in the cytoplasm. It is found in the cytoskeleton. Its subcellular location is the cell projection. The protein localises to the axon. Functionally, neurofilaments usually contain three intermediate filament proteins: NEFL, NEFM, and NEFH which are involved in the maintenance of neuronal caliber. NEFH has an important function in mature axons that is not subserved by the two smaller NF proteins. May additionally cooperate with the neuronal intermediate filament proteins PRPH and INA to form neuronal filamentous networks. The sequence is that of Neurofilament heavy polypeptide (NEFH) from Sus scrofa (Pig).